A 615-amino-acid chain; its full sequence is Hypermethylated in cancer 2 protein (615 aa).

One can recognise a BTB domain in the interval 46–109 (CDVIIMVENS…IYTGKLLPSD (64 aa)). The segment at 144–167 (KPFGSGRAGSTGMGRPPRSQRLST) is disordered. Phosphoserine occurs at positions 166, 169, and 197. 2 disordered regions span residues 182-208 (RKGA…GSNQ) and 229-421 (GCSS…SGHA). Residues 246–250 (GLDLS) are binding to CtBP. Residues 280–296 (SPPAASAPPVANSASYS) show a composition bias toward low complexity. Positions 336–356 (KKEWGKKEPVAGSPFERREAG) are enriched in basic and acidic residues. A Phosphoserine modification is found at Ser348. The span at 379-388 (ASGAGPSGPY) shows a compositional bias: low complexity. Ser412 is subject to Phosphoserine. 5 C2H2-type zinc fingers span residues 442-469 (YVCI…EEEL), 505-532 (FKCS…LTRP), 533-560 (FPCN…GLKP), 561-588 (FACD…GEKP), and 589-615 (YECQ…TSPS).

This sequence belongs to the krueppel C2H2-type zinc-finger protein family. Hic subfamily. Self-associates. Interacts with HIC1. Highest levels in cerebellum.

It localises to the nucleus. Its function is as follows. Transcriptional repressor. This Homo sapiens (Human) protein is Hypermethylated in cancer 2 protein (HIC2).